A 546-amino-acid polypeptide reads, in one-letter code: E3 ubiquitin-protein ligase NEURL1B (546 aa).

One can recognise an NHR 1 domain in the interval 38–194; it reads APRFHAQAKG…ITDEVQLLES (157 aa). Thr199 is subject to Phosphothreonine. In terms of domain architecture, NHR 2 spans 270–424; it reads ELRFHATRGP…GVAGQLRLLG (155 aa). A disordered region spans residues 429–490; that stretch reads SSETMTPSGS…FSAPEPTGSR (62 aa). Residues 457–471 are compositionally biased toward low complexity; the sequence is SSSASESSLVTAPSS. The segment at 494–534 adopts an RING-type zinc-finger fold; that stretch reads CTVCFDSEVDTVIYTCGHMCLCHGCGLRLRRQARACCPICR.

In terms of assembly, interacts with DLL1 and DLL4. As to expression, expressed in the limb buds and dorsal root ganglia. Expressed in brain and kidney and at low levels in the heart.

It localises to the cytoplasm. The enzyme catalyses S-ubiquitinyl-[E2 ubiquitin-conjugating enzyme]-L-cysteine + [acceptor protein]-L-lysine = [E2 ubiquitin-conjugating enzyme]-L-cysteine + N(6)-ubiquitinyl-[acceptor protein]-L-lysine.. Its pathway is protein modification; protein ubiquitination. In terms of biological role, E3 ubiquitin-protein ligase involved in regulation of the Notch pathway through influencing the stability and activity of several Notch ligands. The protein is E3 ubiquitin-protein ligase NEURL1B (Neurl1b) of Mus musculus (Mouse).